Reading from the N-terminus, the 103-residue chain is Cystatin-A (103 aa).

Methionine 1 carries the post-translational modification N-acetylmethionine. The Secondary area of contact motif lies at 52–56 (QVVAG).

It belongs to the cystatin family.

It localises to the cytoplasm. In terms of biological role, this is an intracellular thiol proteinase inhibitor. This Rattus norvegicus (Rat) protein is Cystatin-A (Csta).